The following is a 264-amino-acid chain: MSTTYIPYRLDGKVALVTGSGRGIGAAIATQLGRLGAKVVVNYANASEAAEKVVSEIKSFGTDAVAFKADVRQVAQTAKLMDDAVAHFGSLDIVCSNSGVVSFGHIGEVTEEEFDRVFSLNTRGQFFVAREAYRHLNNGGRIILMSSNTAKDFSVPKHSLYSGSKGAIDSFVRVFSKDCGDKKITVNAVAPGGTVTDMFHDVSQHYIPGGEKYTAEERQEMAAHASPLTRNGFPVDIARVVGFLASNEAEWVNGKILTVDGGAA.

4 residues coordinate NADP(+): Ile24, Asp70, Asn97, and Arg130. Catalysis depends on proton donor residues Ser146 and Ser147. Residues Tyr161, Lys165, and Thr196 each contribute to the NADP(+) site. Tyr161 serves as the catalytic Proton acceptor. The Lowers pKa of active site Tyr role is filled by Lys165.

The protein belongs to the short-chain dehydrogenases/reductases (SDR) family.

It carries out the reaction 3,8,9,10-tetrahydroxy-6-methyl-1,4-dihydroanthracen-1-one + NADPH + H(+) = (3R)-3,8,9,10-tetrahydroxy-6-methyl-1,2,3,4-tetrahydroanthracen-1-one + NADP(+). The protein operates within secondary metabolite biosynthesis. Short chain dehydrogenase/reductase; part of the gene cluster that mediates the biosynthesis of the dimeric xanthones cryptosporioptides. The pathway begins with the synthesis of atrochrysone thioester by the polyketide synthase dmx-nrPKS. The atrochrysone carboxyl ACP thioesterase dmxR1 then breaks the thioester bond and releases the atrochrysone carboxylic acid from dmx-nrPKS. Atrochrysone carboxylic acid is decarboxylated by the decarboxylase dmxR15, and oxidized by the anthrone oxygenase dmxR16 to yield emodin. Emodin is then reduced to emodin hydroquinone by the oxidoreductase dmxR7. A-ring reduction by the short chain dehydrogenase dmxR18, dehydration by the scytalone dehydratase-like protein dmxR17 and probable spontaneous re-oxidation, results in overall deoxygenation to chrysophanol. Baeyer-Villiger oxidation by the Baeyer-Villiger monooxygenase (BVMO) dmxR6 then yields monodictylactone in equilibrium with monodictyphenone. In the case of the cryptosporioptides biosynthesis, monodictylactone is reduced at C-12 to an alcohol (by the short chain dehydrogenases dmxR12 or dmxR8) and hydroxylated at C-5 by dmxR9, yielding the electron-rich aromatic which could eliminate H(2)O to form the ortho-quinonemethide, followed by tautomerisation to paraquinone and complete the formal reduction to produce the 10-methylgroup. Conjugate addition of C-4a-OH to the resulting paraquinone by the monooxygenase dmxR10 then gives cyclohexadienone, which is then reduced at C-5 by the short chain dehydrogenase dmxR3 to give the dihydroxanthone. The 6,7-epoxide in the cryptosporioptides could be introduced by the cytochrome P450 monooxygenase dmxL3. The highly reducing PKS dmxL2 manufactures butyrate, which is further carboxylated by dmxL1 to form ethylmalonate. It is not yet clear whether the carboxylation occurs while the butyrate is attached to the ACP of dmxL2, but this unusual fungal metabolite could then be esterified to O-5 by the O-acetyltransferase dmxR13. Finally, dimerization performed by dmxR5 gives the observed dimers cryptosporioptides A, B and C as the final products of the pathway. This is Short chain dehydrogenase/reductase dmxR18 from Cryptosporiopsis sp. (strain 8999).